Here is a 229-residue protein sequence, read N- to C-terminus: Ribonuclease T (229 aa).

In terms of domain architecture, Exonuclease spans 23 to 197 (VIIDVETAGF…YDTERTAELF (175 aa)). 4 residues coordinate Mg(2+): Asp-26, Glu-28, His-184, and Asp-189. Catalysis depends on His-184, which acts as the Proton donor/acceptor.

The protein belongs to the RNase T family. In terms of assembly, homodimer. Requires Mg(2+) as cofactor.

Trims short 3' overhangs of a variety of RNA species, leaving a one or two nucleotide 3' overhang. Responsible for the end-turnover of tRNA: specifically removes the terminal AMP residue from uncharged tRNA (tRNA-C-C-A). Also appears to be involved in tRNA biosynthesis. In Haemophilus influenzae (strain PittEE), this protein is Ribonuclease T.